Consider the following 326-residue polypeptide: Meiotically up-regulated gene 113 protein (326 aa).

It is found in the cytoplasm. Functionally, has a role in meiosis. This chain is Meiotically up-regulated gene 113 protein (mug113), found in Schizosaccharomyces pombe (strain 972 / ATCC 24843) (Fission yeast).